The primary structure comprises 249 residues: Formylaminopyrimidine import ATP-binding protein ThiZ (249 aa).

In terms of domain architecture, ABC transporter spans 6-228; it reads LTFEEVSFAY…RRKMETTEKM (223 aa). Residue 39-46 coordinates ATP; the sequence is AKSGSGKS.

The protein belongs to the ABC transporter superfamily. The complex is likely composed of an ATP-binding protein (ThiZ), a transmembrane protein (ThiX) and a solute-binding protein (ThiY).

It is found in the cell membrane. Its pathway is cofactor biosynthesis; thiamine diphosphate biosynthesis. Its function is as follows. Participates in a thiamine pyrimidine salvage pathway as part of the ABC transporter complex ThiXYZ involved in the import of thiamine degradation products such as the formylaminopyrimidine N-formyl-4-amino-5-aminomethyl-2-methylpyrimidine (FAMP). Is likely responsible for energy coupling to the transport system. The chain is Formylaminopyrimidine import ATP-binding protein ThiZ from Halalkalibacterium halodurans (strain ATCC BAA-125 / DSM 18197 / FERM 7344 / JCM 9153 / C-125) (Bacillus halodurans).